The following is a 383-amino-acid chain: Succinyl-diaminopimelate desuccinylase (383 aa).

Histidine 69 is a Zn(2+) binding site. Aspartate 71 is a catalytic residue. Aspartate 103 serves as a coordination point for Zn(2+). The active-site Proton acceptor is the glutamate 137. Zn(2+) contacts are provided by glutamate 138, glutamate 166, and histidine 357.

It belongs to the peptidase M20A family. DapE subfamily. Homodimer. Zn(2+) serves as cofactor. Co(2+) is required as a cofactor.

It carries out the reaction N-succinyl-(2S,6S)-2,6-diaminopimelate + H2O = (2S,6S)-2,6-diaminopimelate + succinate. Its pathway is amino-acid biosynthesis; L-lysine biosynthesis via DAP pathway; LL-2,6-diaminopimelate from (S)-tetrahydrodipicolinate (succinylase route): step 3/3. In terms of biological role, catalyzes the hydrolysis of N-succinyl-L,L-diaminopimelic acid (SDAP), forming succinate and LL-2,6-diaminopimelate (DAP), an intermediate involved in the bacterial biosynthesis of lysine and meso-diaminopimelic acid, an essential component of bacterial cell walls. This Rickettsia prowazekii (strain Madrid E) protein is Succinyl-diaminopimelate desuccinylase.